Here is a 1133-residue protein sequence, read N- to C-terminus: Early transcription factor large subunit homolog (1133 aa).

In terms of domain architecture, Helicase ATP-binding spans 52–352; the sequence is KGGRAFFPCD…PNGQPLQRQQ (301 aa). 99 to 106 provides a ligand contact to ATP; that stretch reads WQTGTGKS. A DEAH box motif is present at residues 281-284; that stretch reads DEIH. One can recognise a Helicase C-terminal domain in the interval 524–724; it reads MMKDILSIIR…EGDKALRKHA (201 aa).

It belongs to the DEAD box helicase family. DEAH subfamily.

It is found in the virion. The enzyme catalyses ATP + H2O = ADP + phosphate + H(+). Its function is as follows. Putative initation factor. The polypeptide is Early transcription factor large subunit homolog (Ornithodoros (relapsing fever ticks)).